The primary structure comprises 126 residues: Holo-[acyl-carrier-protein] synthase (126 aa).

Residues D9 and E58 each contribute to the Mg(2+) site.

Belongs to the P-Pant transferase superfamily. AcpS family. Mg(2+) serves as cofactor.

Its subcellular location is the cytoplasm. The enzyme catalyses apo-[ACP] + CoA = holo-[ACP] + adenosine 3',5'-bisphosphate + H(+). Transfers the 4'-phosphopantetheine moiety from coenzyme A to a Ser of acyl-carrier-protein. This is Holo-[acyl-carrier-protein] synthase from Salmonella newport (strain SL254).